A 799-amino-acid polypeptide reads, in one-letter code: Protein-lysine N-methyltransferase SMYD4 (799 aa).

Position 112-114 (112-114 (RSA)) interacts with S-adenosyl-L-methionine. Residues 233 to 570 (LSVSLCTHPL…KGQEILHCYG (338 aa)) form the SET domain. Zn(2+) contacts are provided by Cys-296, Cys-299, Cys-309, Cys-312, Cys-318, Cys-322, His-331, and Cys-335. The MYND-type zinc-finger motif lies at 296–335 (CHRCLKHTLATVPCGSCSYAKYCSQECMQQAWDLYHSTEC). Residues 535 to 536 (NH), Tyr-569, and Phe-591 each bind S-adenosyl-L-methionine.

The protein belongs to the class V-like SAM-binding methyltransferase superfamily. Interacts (via MYND-type zinc finger) with HDAC1.

The protein localises to the nucleus. Its subcellular location is the cytoplasm. It catalyses the reaction L-lysyl-[protein] + S-adenosyl-L-methionine = N(6)-methyl-L-lysyl-[protein] + S-adenosyl-L-homocysteine + H(+). Protein-lysine N-methyltransferase. Monomethylates PRMT5, modulating its transcriptional activity. May also act as a histone methyltransferase. Plays a critical role in cardiac development. Acts as a key epigenetic regulator of gene expression during cardiac development via its dual activities as a methyltransferase and negative regulator of HDAC1. The sequence is that of Protein-lysine N-methyltransferase SMYD4 (Smyd4) from Mus musculus (Mouse).